Here is a 284-residue protein sequence, read N- to C-terminus: Ribosomal RNA small subunit methyltransferase A (284 aa).

6 residues coordinate S-adenosyl-L-methionine: Asn22, Leu24, Gly49, Glu70, Asp97, and Asn117.

It belongs to the class I-like SAM-binding methyltransferase superfamily. rRNA adenine N(6)-methyltransferase family. RsmA subfamily.

It localises to the cytoplasm. The enzyme catalyses adenosine(1518)/adenosine(1519) in 16S rRNA + 4 S-adenosyl-L-methionine = N(6)-dimethyladenosine(1518)/N(6)-dimethyladenosine(1519) in 16S rRNA + 4 S-adenosyl-L-homocysteine + 4 H(+). Functionally, specifically dimethylates two adjacent adenosines (A1518 and A1519) in the loop of a conserved hairpin near the 3'-end of 16S rRNA in the 30S particle. May play a critical role in biogenesis of 30S subunits. In Desulforapulum autotrophicum (strain ATCC 43914 / DSM 3382 / VKM B-1955 / HRM2) (Desulfobacterium autotrophicum), this protein is Ribosomal RNA small subunit methyltransferase A.